The chain runs to 492 residues: NADH-quinone oxidoreductase subunit N 2 (492 aa).

Transmembrane regions (helical) follow at residues 16-36 (ILPE…DALI), 44-64 (PLGY…ACQA), 87-107 (FSLF…LVSF), 118-138 (GEYY…TSAT), 140-160 (LVLI…LAAM), 175-195 (FLLG…IFGA), 216-236 (PIIY…VAAA), 250-270 (PSPI…AVLL), 282-302 (FWIV…GALV), 309-329 (LLAY…AAAK), 333-353 (ISAA…AFAV), 381-401 (AAIL…GGFF), 416-438 (VWLT…RIIV), and 455-475 (PFGL…LGVL).

This sequence belongs to the complex I subunit 2 family. NDH-1 is composed of 14 different subunits. Subunits NuoA, H, J, K, L, M, N constitute the membrane sector of the complex.

Its subcellular location is the cell inner membrane. The enzyme catalyses a quinone + NADH + 5 H(+)(in) = a quinol + NAD(+) + 4 H(+)(out). NDH-1 shuttles electrons from NADH, via FMN and iron-sulfur (Fe-S) centers, to quinones in the respiratory chain. The immediate electron acceptor for the enzyme in this species is believed to be ubiquinone. Couples the redox reaction to proton translocation (for every two electrons transferred, four hydrogen ions are translocated across the cytoplasmic membrane), and thus conserves the redox energy in a proton gradient. The sequence is that of NADH-quinone oxidoreductase subunit N 2 from Koribacter versatilis (strain Ellin345).